The sequence spans 287 residues: Putative inactive carboxylesterase 4 (287 aa).

Positions 1 to 18 are cleaved as a signal peptide; the sequence is MWLPALVLATLAASAAWA. A glycan (N-linked (GlcNAc...) asparagine) is linked at Asn-80.

It belongs to the type-B carboxylesterase/lipase family. Expressed in placenta.

Its subcellular location is the secreted. Functionally, has no esterase activity. In Homo sapiens (Human), this protein is Putative inactive carboxylesterase 4 (CES1P1).